A 98-amino-acid chain; its full sequence is Large ribosomal subunit protein uL23 (98 aa).

This sequence belongs to the universal ribosomal protein uL23 family. As to quaternary structure, part of the 50S ribosomal subunit. Contacts protein L29, and trigger factor when it is bound to the ribosome.

One of the early assembly proteins it binds 23S rRNA. One of the proteins that surrounds the polypeptide exit tunnel on the outside of the ribosome. Forms the main docking site for trigger factor binding to the ribosome. This is Large ribosomal subunit protein uL23 from Halorhodospira halophila (strain DSM 244 / SL1) (Ectothiorhodospira halophila (strain DSM 244 / SL1)).